The chain runs to 847 residues: Glucans biosynthesis glucosyltransferase H (847 aa).

Topologically, residues 1-138 (MNKTTEYIDA…KWRTVGTIRR (138 aa)) are cytoplasmic. The chain crosses the membrane as a helical span at residues 139–156 (YILLILTLAQTVVATWYM). The Periplasmic segment spans residues 157-193 (KTILPYQGWALINPMDMVGQDIWVSFMQLLPYMLQTG). A helical transmembrane segment spans residues 194 to 216 (ILILFAVLFCWVSAGFWTALMGF). Topologically, residues 217–511 (LQLLIGRDKY…LVKGMHPVHR (295 aa)) are cytoplasmic. The chain crosses the membrane as a helical span at residues 512-534 (AVFLTGVMSYLSAPLWFMFLALS). Residues 535–567 (TALQVVHALTEPQYFLQPRQLFPVWPQWRPELA) are Periplasmic-facing. The helical transmembrane segment at 568-590 (IALFASTMVLLFLPKLLSIMLIW) threads the bilayer. Residues 591–602 (CKGTKEYGGFWR) are Cytoplasmic-facing. The helical transmembrane segment at 603-625 (VTLSLLLEVLFSVLLAPVRMLFH) threads the bilayer. Residues 626-679 (TVFVVSAFLGWEVVWNSPQRDDDSTPWGEAFMRHGSQLLLGLVWAVGMAWLDLR) lie on the Periplasmic side of the membrane. Residues 680–702 (FLFWLAPIVFSLILSPFVSVISS) traverse the membrane as a helical segment. Residues 703-847 (RSTVGLRTKR…ALQGRTSSAR (145 aa)) are Cytoplasmic-facing.

This sequence belongs to the glycosyltransferase 2 family. OpgH subfamily.

The protein localises to the cell inner membrane. It functions in the pathway glycan metabolism; osmoregulated periplasmic glucan (OPG) biosynthesis. In terms of biological role, involved in the biosynthesis of osmoregulated periplasmic glucans (OPGs). This chain is Glucans biosynthesis glucosyltransferase H, found in Salmonella typhimurium (strain LT2 / SGSC1412 / ATCC 700720).